The following is a 229-amino-acid chain: Cell division protein FtsQ (229 aa).

Residues 1–21 (MIVLLCVIFAFLVYSNWHSWL) traverse the membrane as a helical segment. Residues 22 to 229 (ESLDRNPIRA…AAVGFSPLPK (208 aa)) lie on the Periplasmic side of the membrane. Positions 27 to 97 (NPIRAYALTH…DRLSITLIEH (71 aa)) constitute a POTRA domain.

This sequence belongs to the FtsQ/DivIB family. FtsQ subfamily. In terms of assembly, part of a complex composed of FtsB, FtsL and FtsQ.

The protein resides in the cell inner membrane. In terms of biological role, essential cell division protein. May link together the upstream cell division proteins, which are predominantly cytoplasmic, with the downstream cell division proteins, which are predominantly periplasmic. May control correct divisome assembly. This is Cell division protein FtsQ from Actinobacillus pleuropneumoniae serotype 3 (strain JL03).